Consider the following 244-residue polypeptide: Cysteine-rich secretory protein 1 (244 aa).

The signal sequence occupies residues 1–19 (MALMLVLFFLAAVLPPSLL). One can recognise an SCP domain in the interval 44–170 (SKHNQLRRMV…PLRYYYVCHY (127 aa)). Asn145 carries an N-linked (GlcNAc...) asparagine glycan. Cystine bridges form between Cys190/Cys197, Cys193/Cys202, Cys206/Cys239, Cys215/Cys233, and Cys224/Cys237. The region spanning 206-239 (CGHEDKYTNCKYLKKMLSCEHELLKKGCKATCLC) is the ShKT domain.

It belongs to the CRISP family. In terms of tissue distribution, mainly found in the cauda epididymis where it is synthesized by the principal cells and secreted into the lumen. Binds to the heads of spermatozoa. Also expressed in the submandibular gland.

Its subcellular location is the cytoplasmic vesicle. It is found in the secretory vesicle. This protein is supposed to help spermatozoa undergo functional maturation while they move from the testis to the ductus deferens. This Mus musculus (Mouse) protein is Cysteine-rich secretory protein 1 (Crisp1).